Here is a 368-residue protein sequence, read N- to C-terminus: Polymerase delta-interacting protein 2 (368 aa).

The transit peptide at 1–21 directs the protein to the mitochondrion; it reads MAGCVARRALAVGSRWWSRSL. Positions 235–360 constitute an ApaG domain; that stretch reads RETTENIRVT…FSLESNKDEK (126 aa). Position 292 is a phosphothreonine (T292).

In terms of assembly, interacts with PCNA and POLD2. Interacts with SSBP1. Interacts with PRIMPOL; leading to enhance DNA polymerase activity of PRIMPOL. Interacts with POLH. Interacts with POLD1; leading to stimulate DNA polymerase activity of POLD1.

The protein localises to the mitochondrion matrix. It localises to the nucleus. In terms of biological role, involved in DNA damage tolerance by regulating translesion synthesis (TLS) of templates carrying DNA damage lesions such as 8oxoG and abasic sites. May act by stimulating activity of DNA polymerases involved in TLS, such as PRIMPOL and polymerase delta (POLD1). The protein is Polymerase delta-interacting protein 2 of Mus musculus (Mouse).